The chain runs to 310 residues: Probable plastid-lipid-associated protein 2, chloroplastic (310 aa).

Residues 1-59 (MATVQLSTQFSCQTRVSISPNSKSISKPPFLVPVTSIIHRPMISTGGIAVSPRRVFKVR) constitute a chloroplast transit peptide. Phosphothreonine is present on Thr-61. Residues 65–94 (EIGSALLAAEEAIEDVEETERLKRSLVDSL) are a coiled coil.

The protein belongs to the PAP/fibrillin family.

It localises to the plastid. The protein resides in the chloroplast. The protein localises to the plastoglobule. Probably involved in light/cold stress-related jasmonate (JA) biosynthesis. The protein is Probable plastid-lipid-associated protein 2, chloroplastic (PAP2) of Arabidopsis thaliana (Mouse-ear cress).